The following is a 251-amino-acid chain: uncharacterized protein (251 aa).

Positions 1 to 18 (MRILIILSIILCSLSIRA) are cleaved as a signal peptide.

Belongs to the MlaA family.

This is an uncharacterized protein from Rickettsia conorii (strain ATCC VR-613 / Malish 7).